The following is a 183-amino-acid chain: Ribosome maturation factor RimM (183 aa).

Residues 104–183 (EGDYYWKDLM…TIEVDWDPGF (80 aa)) form the PRC barrel domain.

It belongs to the RimM family. In terms of assembly, binds ribosomal protein uS19.

It localises to the cytoplasm. In terms of biological role, an accessory protein needed during the final step in the assembly of 30S ribosomal subunit, possibly for assembly of the head region. Essential for efficient processing of 16S rRNA. May be needed both before and after RbfA during the maturation of 16S rRNA. It has affinity for free ribosomal 30S subunits but not for 70S ribosomes. The protein is Ribosome maturation factor RimM of Salmonella choleraesuis (strain SC-B67).